A 143-amino-acid polypeptide reads, in one-letter code: Large ribosomal subunit protein uL11 (143 aa).

Belongs to the universal ribosomal protein uL11 family. Part of the ribosomal stalk of the 50S ribosomal subunit. Interacts with L10 and the large rRNA to form the base of the stalk. L10 forms an elongated spine to which L12 dimers bind in a sequential fashion forming a multimeric L10(L12)X complex. One or more lysine residues are methylated.

In terms of biological role, forms part of the ribosomal stalk which helps the ribosome interact with GTP-bound translation factors. In Phenylobacterium zucineum (strain HLK1), this protein is Large ribosomal subunit protein uL11.